The sequence spans 427 residues: Isocitrate dehydrogenase [NADP] (427 aa).

NADP(+) is bound at residue T114. S123, N125, R129, R139, and R163 together coordinate D-threo-isocitrate. D317 contacts Mg(2+). Residues 349–355 (HGTAPKY), N362, Y401, and R405 each bind NADP(+).

Belongs to the isocitrate and isopropylmalate dehydrogenases family. In terms of assembly, homodimer. Mg(2+) serves as cofactor. It depends on Mn(2+) as a cofactor.

It carries out the reaction D-threo-isocitrate + NADP(+) = 2-oxoglutarate + CO2 + NADPH. In terms of biological role, catalyzes the oxidative decarboxylation of isocitrate to 2-oxoglutarate and carbon dioxide with the concomitant reduction of NADP(+). The sequence is that of Isocitrate dehydrogenase [NADP] (icd) from Coxiella burnetii (strain RSA 493 / Nine Mile phase I).